The primary structure comprises 284 residues: Tropomyosin (284 aa).

Positions 1 to 284 (MDSIKKKMMA…DTTFAELTSF (284 aa)) form a coiled coil. Residues 97–140 (EDFEQSSGRLTETSTKLDDASKAAEESERNRKTLETRSISDDER) are disordered. The span at 101–110 (QSSGRLTETS) shows a compositional bias: polar residues. The segment covering 111–140 (TKLDDASKAAEESERNRKTLETRSISDDER) has biased composition (basic and acidic residues).

Belongs to the tropomyosin family. Homodimer.

Functionally, tropomyosin, in association with the troponin complex, plays a central role in the calcium dependent regulation of muscle contraction. In Echinococcus multilocularis (Fox tapeworm), this protein is Tropomyosin.